The chain runs to 135 residues: Small ribosomal subunit protein uS9 (135 aa).

Residues 102-115 (PLKTEGHLSRDPRA) show a composition bias toward basic and acidic residues. The tract at residues 102 to 135 (PLKTEGHLSRDPRAKERRKYGLKKARKAPQFSKR) is disordered. Positions 116-135 (KERRKYGLKKARKAPQFSKR) are enriched in basic residues.

It belongs to the universal ribosomal protein uS9 family.

The polypeptide is Small ribosomal subunit protein uS9 (Synechococcus sp. (strain CC9311)).